The primary structure comprises 683 residues: Protein zntD (683 aa).

The next 3 helical transmembrane spans lie at 12-32 (IISTTVLFILSLLAGIAPYWM), 42-62 (LSWSNTFAGGVFFGAGMLHLF), and 79-99 (PFAALCLCVGFLITLFLELII). Residues 120 to 129 (VHLSHGHSHH) show a composition bias toward basic residues. Disordered stretches follow at residues 120–180 (VHLS…TTTT), 299–325 (GFSNNNNNNNNNNNNNNKNNNNNNNNN), 364–390 (CSNDNSNSNNNNSSNNNSSSANITPNT), and 451–489 (IGNSGNIGSNNNNNNNGGGGGGGGNSNIDYNDNEENNNN). The span at 137–149 (GNPGSGVGIGMGS) shows a compositional bias: gly residues. Composition is skewed to low complexity over residues 160–180 (TTSPTITPTTPSEGTTTTTTT) and 302–325 (NNNNNNNNNNNNNNKNNNNNNNNN). A compositionally biased stretch (low complexity) spans 451–465 (IGNSGNIGSNNNNNN). The segment covering 466–475 (NGGGGGGGGN) has biased composition (gly residues). Residues 476–489 (SNIDYNDNEENNNN) show a composition bias toward low complexity. A run of 5 helical transmembrane segments spans residues 534–554 (ILLPFILVIALSIHSLFEGLA), 564–584 (VFDILIAIFAHKILASFALGI), 600–620 (FLLVFVFSLTSPIGSILGMVI), 631–651 (PPILQGIASGTFLYVAVVEII), and 662–682 (ILIKSFLLLLGFSGMAVVAIW).

Belongs to the ZIP transporter (TC 2.A.5) family.

It is found in the membrane. In terms of biological role, may transport divalent cations. May participate, with dstA, in the regulation of the differentiation of stalk cells during development. The protein is Protein zntD (zntD) of Dictyostelium discoideum (Social amoeba).